A 573-amino-acid polypeptide reads, in one-letter code: Glutathione/L-cysteine transport system ATP-binding/permease protein CydC (573 aa).

Topologically, residues 1-15 are cytoplasmic; sequence MRALLPYLALYKRHK. The next 2 helical transmembrane spans lie at 16–36 and 37–57; these read WMLSLGIVLAIVTLLASIGLL and TLSGWFLSASAVAGVAGLYSF. The region spanning 20–306 is the ABC transmembrane type-1 domain; the sequence is LGIVLAIVTL…VTGAFQHLGQ (287 aa). Over 58 to 136 the chain is Cytoplasmic; that stretch reads NYMLPAAGVR…VDTLDHLYLR (79 aa). Residues 137–157 traverse the membrane as a helical segment; it reads VISPLVGAFVVIMVVTIGLSF. The Periplasmic segment spans residues 158–161; it reads LDFT. A helical membrane pass occupies residues 162–182; it reads LAFTLGGIMLLTLFLMPPLFY. The Cytoplasmic segment spans residues 183–249; sequence RAGKSTGQNL…QSELTALSQA (67 aa). The helical transmembrane segment at 250 to 270 threads the bilayer; that stretch reads IMLLIGALAVILMLWMASGGV. Topologically, residues 271–276 are periplasmic; the sequence is GGNAQP. The helical transmembrane segment at 277–297 threads the bilayer; the sequence is GALIALFVFCALAAFEALAPV. At 298–573 the chain is on the cytoplasmic side; the sequence is TGAFQHLGQV…GRYYQFKQGL (276 aa). The ABC transporter domain maps to 339–572; the sequence is LTLRDVQFTY…QGRYYQFKQG (234 aa). 373–380 contributes to the ATP binding site; that stretch reads GRTGCGKS.

Belongs to the ABC transporter superfamily. Cysteine exporter (TC 3.A.1.129.1) family. In terms of assembly, forms a heterodimer with CydD.

The protein resides in the cell inner membrane. It carries out the reaction L-cysteine(in) + ATP + H2O = L-cysteine(out) + ADP + phosphate + H(+). It catalyses the reaction glutathione(in) + ATP + H2O = glutathione(out) + ADP + phosphate + H(+). Its activity is regulated as follows. ATPase activity is stimulated by various thiol compounds. The presence of heme leads to a further enhancement of thiol-stimulated ATPase activity, although a large excess of heme inhibits activity. Glutathione transport is inhibited by sodium orthovanadate, an inhibitor of ABC-type transport systems, but not by the proton ionophore carbonyl cyanide m-chlorophenylhydrazone (CCCP). Its function is as follows. Part of the ABC transporter complex CydDC that exports the reduced low-molecular-weight thiols cysteine and glutathione to the periplasm. Export of these thiol-containing redox-active molecules may be crucial for redox homeostasis in the periplasm, permitting correct assembly of various respiratory complexes and formation of correct disulfide bonds in periplasmic and secreted proteins. CydC contains transmembrane domains (TMD), which form a pore in the inner membrane, and an ATP-binding domain (NBD), which is responsible for energy generation. Required for the assembly of functional cytochrome bd-type quinol oxidases and periplasmic c-type cytochromes. Overexpression of CydDC under anaerobic conditions also results in the formation of a heme biosynthesis-derived pigment, P-574. CydDC binds heme b, but heme is probably not transported by the complex and instead has a role in regulating ATPase activity. Conversely, a more recent study suggests an alternative function of CydDC: authors suggest that CydDC does not mediate the export of L-cysteine but rather reduces cytoplasmic L-cystine to L-cysteine. The principle function of CydDC would be to maintain the reduced state of cytoplasmic L-cysteine, thereby providing an important connection between sulfur metabolism, oxidative stress and resistance to antibiotics. This Escherichia coli (strain K12) protein is Glutathione/L-cysteine transport system ATP-binding/permease protein CydC.